We begin with the raw amino-acid sequence, 486 residues long: ATP-dependent rRNA helicase rrp3 (486 aa).

The segment at 1 to 60 (MSSVKRRKTDKNPSLEGLKSKKTKESKKESHTPSPEPIEDTEDNRVIEETEEAEEDDAPK) is disordered. Positions 60–88 (KSFKDLGIVDSLCEACDTLGYKAPTPIQR) match the Q motif motif. In terms of domain architecture, Helicase ATP-binding spans 91–262 (IPLALQGRDL…RASLKDPLRV (172 aa)). ATP is bound at residue 104 to 111 (AETGSGKT). The short motif at 210–213 (DEAD) is the DEAD box element. One can recognise a Helicase C-terminal domain in the interval 286 to 434 (HKDTYLIYLL…EYPTVKDEVM (149 aa)). 2 stretches are compositionally biased toward basic and acidic residues: residues 447–460 (ARNE…DRGK) and 476–486 (RGRDEMDREEG). Residues 447-486 (ARNEMKNLHEDRGKKGAVLKGRRPANGAKRGRDEMDREEG) are disordered.

The protein belongs to the DEAD box helicase family. DDX47/RRP3 subfamily. As to quaternary structure, interacts with the SSU processome.

It localises to the nucleus. The catalysed reaction is ATP + H2O = ADP + phosphate + H(+). Its function is as follows. ATP-dependent rRNA helicase required for pre-ribosomal RNA processing. Involved in the maturation of the 35S-pre-rRNA and to its cleavage to mature 18S rRNA. In Botryotinia fuckeliana (strain B05.10) (Noble rot fungus), this protein is ATP-dependent rRNA helicase rrp3.